The chain runs to 540 residues: Phosphatidylinositol 4-phosphate 5-kinase type-1 beta (540 aa).

A disordered region spans residues 1 to 21; sequence MSSAAENGEAAPGKQNEEKTY. The 371-residue stretch at 25 to 395 folds into the PIPK domain; that stretch reads ASSAIKGAIQ…RFLKFMNSRV (371 aa). S445, S447, and S448 each carry phosphoserine.

As to quaternary structure, interacts with RAC1, AJUBA, PLD1, PLD2 and ARF1. Detected in heart, pancreas, brain, kidney, skeletal muscle and lung.

Its subcellular location is the cytoplasm. It is found in the cytosol. The protein resides in the cell membrane. The protein localises to the endomembrane system. It carries out the reaction a 1,2-diacyl-sn-glycero-3-phospho-(1D-myo-inositol 4-phosphate) + ATP = a 1,2-diacyl-sn-glycero-3-phospho-(1D-myo-inositol-4,5-bisphosphate) + ADP + H(+). It catalyses the reaction 1-octadecanoyl-2-(5Z,8Z,11Z,14Z)-eicosatetraenoyl-sn-glycero-3-phospho-1D-myo-inositol 4-phosphate + ATP = 1-octadecanoyl-2-(5Z,8Z,11Z,14Z)-eicosatetraenoyl-sn-glycero-3-phospho-1D-myo-inositol 4,5-bisphosphate + ADP + H(+). The catalysed reaction is 1-octadecanoyl-2-(9Z)-octadecenoyl-sn-glycero-3-phospho-1D-myo-inositol 4-phosphate + ATP = 1-octadecanoyl-2-(9Z)-octadecenoyl-sn-glycero-3-phospho-1D-myo-inositol 4,5-bisphosphate + ADP + H(+). The enzyme catalyses 1-octadecanoyl-2-(9Z)-octadecenoyl-sn-glycero-3-phospho-1D-myo-inositol + ATP = 1-octadecanoyl-2-(9Z)-octadecenoyl-sn-glycero-3-phospho-1D-myo-inositol 5-phosphate + ADP + H(+). It carries out the reaction 1-octadecanoyl-2-(9Z,12Z)-octadecadienoyl-sn-glycero-3-phospho-1D-myo-inositol + ATP = 1-octadecanoyl-2-(9Z,12Z)-octadecadienoyl-sn-glycero-3-phospho-1D-myo-inositol 5-phosphate + ADP + H(+). It catalyses the reaction 1-octadecanoyl-2-(5Z,8Z,11Z,14Z-eicosatetraenoyl)-sn-glycero-3-phospho-(1D-myo-inositol) + ATP = 1-octadecanoyl-2-(5Z,8Z,11Z,14Z)-eicosatetraenoyl-sn-glycero-3-phospho-1D-myo-inositol 5-phosphate + ADP + H(+). The catalysed reaction is 1,2-di-(9Z,12Z)-octadecadienoyl-sn-glycero-3-phospho-1D-myo-inositol + ATP = 1,2-di(9Z,12Z)-octadecadienoyl-sn-glycero-3-phospho-1D-myo-inositol 5-phosphate + ADP + H(+). In terms of biological role, catalyzes the phosphorylation of phosphatidylinositol 4-phosphate (PtdIns(4)P/PI4P) to form phosphatidylinositol 4,5-bisphosphate (PtdIns(4,5)P2/PIP2), a lipid second messenger that regulates several cellular processes such as signal transduction, vesicle trafficking, actin cytoskeleton dynamics, cell adhesion, and cell motility. PtdIns(4,5)P2 can directly act as a second messenger or can be utilized as a precursor to generate other second messengers: inositol 1,4,5-trisphosphate (IP3), diacylglycerol (DAG) or phosphatidylinositol-3,4,5-trisphosphate (PtdIns(3,4,5)P3/PIP3). Mediates RAC1-dependent reorganization of actin filaments. Contributes to the activation of phospholipase PLD2. Together with PIP5K1A, is required, after stimulation by G-protein coupled receptors, for the synthesis of IP3 that will induce stable platelet adhesion. The polypeptide is Phosphatidylinositol 4-phosphate 5-kinase type-1 beta (Homo sapiens (Human)).